Consider the following 1834-residue polypeptide: Sodium channel protein type 4 subunit alpha (1834 aa).

Residues 1-131 (MASSSLPNLV…RSAIKVLIHS (131 aa)) are Cytoplasmic-facing. Residues 113–448 (MLSPFSIIRR…VVTMAYAEQN (336 aa)) form an I repeat. Residues 132–150 (LFSMFIMITILPNCVVMTM) form a helical membrane-spanning segment. Residues 151–157 (SDPPPWP) are Extracellular-facing. Residues 158–178 (IHVENTFTGINTFESLIKMLA) traverse the membrane as a helical segment. Over 179–192 (RGFCIDDFTFLRDP) the chain is Cytoplasmic. Residues 193–210 (WNWLDFSVIMMAYLTEFV) traverse the membrane as a helical segment. At 211-216 (DLGNIS) the chain is on the extracellular side. Asn214 is a glycosylation site (N-linked (GlcNAc...) asparagine). Residues 217–233 (ALRTFRVLRALKTITVI) form a helical membrane-spanning segment. Residues 234-252 (PGLKTIVGALIQSVKKLSD) lie on the Cytoplasmic side of the membrane. The helical transmembrane segment at 253–272 (VMILTVFCLSVFALVGLQLF) threads the bilayer. The Extracellular portion of the chain corresponds to 273–385 (MGNLRQKCVR…PNYGYTSHDT (113 aa)). Cys280 and Cys354 are oxidised to a cystine. N-linked (GlcNAc...) asparagine glycosylation is found at Asn288, Asn291, Asn297, Asn303, Asn309, Asn327, and Asn356. An intrachain disulfide couples Cys363 to Cys369. The pore-forming intramembrane region spans 386–410 (FSWAFLALFRLMIQDYWENLFQLTL). Residues 411-417 (RAAGKTY) lie on the Extracellular side of the membrane. Residues 418-438 (MIFFVVIIFLGSFYLINLILA) form a helical membrane-spanning segment. Residues 439-572 (VVTMAYAEQN…NIIHLIVMDP (134 aa)) lie on the Cytoplasmic side of the membrane. A disordered region spans residues 486–525 (EGGEAGGDPAHSKDCNGSLDTSPGEKGPPRQSCSADSGVS). The stretch at 554–826 (CCTPWVKFKN…QISSWPIKLG (273 aa)) is one II repeat. Residues 573-591 (FVDLGITICIVLNTLFMAM) traverse the membrane as a helical segment. Topologically, residues 592–602 (EHYPMTEHFDK) are extracellular. The helical transmembrane segment at 603 to 622 (VLTVGNLVFTGIFTAEMVLK) threads the bilayer. At 623 to 636 (LIALDPYEYFQQGW) the chain is on the cytoplasmic side. A helical transmembrane segment spans residues 637–656 (NVFDSIIVTLSWVELGLVNV). Topologically, residues 657 to 658 (KG) are extracellular. Residues 659–676 (LSVLRSFRLVRSLKLAKS) form a helical membrane-spanning segment. Residues 677–692 (WPTLNMFIRIIGNSGG) are Cytoplasmic-facing. The helical transmembrane segment at 693–711 (GLGNLTLVLAIIVVNFSVV) threads the bilayer. The Extracellular segment spans residues 712 to 740 (GMQLFGKNYKECVCKNASDCALPRWKMCD). Cys725 and Cys731 form a disulfide bridge. The segment at residues 741–761 (FFHSFLIVLRILCGEWIEPMW) is an intramembrane region (pore-forming). Residues 762–772 (GFMEVAGQAMF) are Extracellular-facing. A helical transmembrane segment spans residues 773–791 (LTVLLMVMVNGNLVDLDLF). The Cytoplasmic segment spans residues 792–1029 (LALLLNPLNS…ACFKIVEHHW (238 aa)). 2 disordered regions span residues 853–886 (GDPGEAGEAGEAEESAPEDEKKEPPPEDDDKDLK) and 929–989 (SDLE…QPEE). Residues 860 to 869 (EAGEAEESAP) show a composition bias toward acidic residues. The span at 870–886 (EDEKKEPPPEDDDKDLK) shows a compositional bias: basic and acidic residues. 2 stretches are compositionally biased toward acidic residues: residues 929–945 (SDLEMPTEEETDTFSEP) and 972–989 (EDPEEQAEENPEGEQPEE). One copy of the III repeat lies at 1010-1323 (RGKMWWTLRR…KKYYNAMKKL (314 aa)). Residues 1030–1047 (FKTFNSSLILLNSGTLAF) traverse the membrane as a helical segment. Over 1048 to 1060 (EDIYIEQRRVIRT) the chain is Extracellular. A helical transmembrane segment spans residues 1061–1079 (ILEYADKVFTYIFIMEMLL). Residues 1080–1093 (KWVAYGFKVYFTNA) are Cytoplasmic-facing. Residues 1094 to 1112 (WCWLDFLIVDVSIISLVAN) form a helical membrane-spanning segment. Residues 1113–1120 (WLGYSELG) lie on the Extracellular side of the membrane. A helical transmembrane segment spans residues 1121–1139 (PIKSLRTLRALRPLRALSR). Residues 1140–1156 (FEGMRVVVNALLGAIPS) lie on the Cytoplasmic side of the membrane. The helical transmembrane segment at 1157-1176 (IMNVLLVCLIFWVIFSIMGV) threads the bilayer. The Extracellular segment spans residues 1177–1227 (NLFAAKIYYFINTTTSERFDISGVNNKSECESLIHTGQVRWLNVKVNYDNV). N-linked (GlcNAc...) asparagine glycans are attached at residues Asn1188 and Asn1202. The pore-forming intramembrane region spans 1228 to 1249 (GLGYLSLLQVATFKGWMDIMYS). Residues 1250–1266 (AVDSREQEEQPQYEVNI) lie on the Extracellular side of the membrane. The helical transmembrane segment at 1267-1288 (YMYLYFVIFIIFGSFFTINSLI) threads the bilayer. Residues 1289–1351 (RLIIVNFNQQ…MVYDFVTKQV (63 aa)) lie on the Cytoplasmic side of the membrane. Positions 1307 to 1309 (IFM) are important for rapid channel inactivation. The stretch at 1332–1630 (IPRPQNKIQG…WEKFGPDATQ (299 aa)) is one IV repeat. The helical transmembrane segment at 1352 to 1369 (FDITIMILICLNMVTMMV) threads the bilayer. The Extracellular segment spans residues 1370–1380 (ETDDQSQLKVD). The helical transmembrane segment at 1381–1399 (ILYNINMVFIIVFTGECVL) threads the bilayer. Topologically, residues 1400-1411 (KMFALRQNYFTV) are cytoplasmic. The helical transmembrane segment at 1412-1429 (GWNIFDFVVVILSIVGLA) threads the bilayer. At 1430 to 1442 (LSDLIQKYFVSPT) the chain is on the extracellular side. A helical membrane pass occupies residues 1443–1459 (LFRVIRLARIGRVLRLI). At 1460-1478 (RGAKGIRTLLFALMMSLPA) the chain is on the cytoplasmic side. The helical transmembrane segment at 1479-1496 (LFNIGLLLILVMFIYSIF) threads the bilayer. Over 1497–1518 (GMSNFAYVKKESGIDDMFNFET) the chain is Extracellular. Residues 1519–1541 (FGNSIICLFEITTSAGWDGLLNP) constitute an intramembrane region (pore-forming). Residues 1542-1571 (ILNSGPPDCDPTLENPGTSVRGDCGNPSIG) lie on the Extracellular side of the membrane. Cys1550 and Cys1565 are oxidised to a cystine. A helical membrane pass occupies residues 1572 to 1594 (ICFFCSYIIISFLIVVNMYIAII). Residues 1595–1834 (LENFNVATEE…LHPGVKESLV (240 aa)) are Cytoplasmic-facing. Residues 1724 to 1753 (EEVCAIKIQRAYRRHLLQRSVKQASYMYRH) enclose the IQ domain. Residues 1776 to 1834 (MYGRENGNSGVQNKGEERGSTGDAGPTMGLTPINPSDSALPPSPPPGLPLHPGVKESLV) form a disordered region.

Belongs to the sodium channel (TC 1.A.1.10) family. Nav1.4/SCN4A subfamily. The Nav1.4 voltage-gated sodium channel consists of an ion-conducting alpha subunit SCN4A which is functional on its own and a regulatory beta subunit SCN1B. SCN1B strongly enhances the presence of SCN4A at the cell surface. SCN1B is also required for rapid channel inactivation and recovery after inactivation. It prevents the decrease of channel activity in response to repetitive, high-frequency depolarizations. Interacts with the syntrophins SNTA1, SNTB1 and SNTB2 (via PDZ domain); probably links SCN4A to the actin cytoskeleton and the extracellular matrix via the dystrophin-associated protein complex and regulates its localization in muscle cells. Interacts with TMEM233; probable regulator of the channel.

Its subcellular location is the cell membrane. It catalyses the reaction Na(+)(in) = Na(+)(out). Its function is as follows. Pore-forming subunit of Nav1.4, a voltage-gated sodium (Nav) channel that directly mediates the depolarizing phase of action potentials in excitable membranes. Navs, also called VGSCs (voltage-gated sodium channels) or VDSCs (voltage-dependent sodium channels), operate by switching between closed and open conformations depending on the voltage difference across the membrane. In the open conformation they allow Na(+) ions to selectively pass through the pore, along their electrochemical gradient. The influx of Na+ ions provokes membrane depolarization, initiating the propagation of electrical signals throughout cells and tissues. Highly expressed in skeletal muscles, Nav1.4 generates the action potential crucial for muscle contraction. The protein is Sodium channel protein type 4 subunit alpha of Equus caballus (Horse).